The primary structure comprises 1794 residues: Protein TIC 214 (1794 aa).

6 helical membrane-spanning segments follow: residues 23–43 (VVVG…SYLF), 64–84 (FIMG…HLAL), 87–107 (PHTI…WNNH), 124–144 (LSIQ…HFIL), 172–192 (VGWL…LFWI), and 218–238 (ILSI…PSPI). The interval 244–307 (KETSETGETE…REGVNGKEKT (64 aa)) is disordered. The span at 248 to 258 (ETGETEEETDV) shows a compositional bias: acidic residues. Basic and acidic residues-rich tracts occupy residues 259 to 276 (EIER…KEGS) and 286 to 307 (SEEK…KEKT).

The protein belongs to the TIC214 family. As to quaternary structure, part of the Tic complex.

Its subcellular location is the plastid. The protein localises to the chloroplast inner membrane. Its function is as follows. Involved in protein precursor import into chloroplasts. May be part of an intermediate translocation complex acting as a protein-conducting channel at the inner envelope. This Amborella trichopoda protein is Protein TIC 214.